Reading from the N-terminus, the 332-residue chain is MSTKEKLISHVSKEEAVGSRNKVTVVGVGMVGMASAISILLKDLCDELALVDVMEDKLKGEVMDLQHGSLFLKTHKIVGDKDYSVTANSRVVVVTAGARQQEGESRLNLVQRNVNIFKFIIPNIVKYSPNCILMVVSNPVDILTYVAWKLSGFPRHRVIGSGTNLDSARFRHIMGEKLHLHPSSCHGWIVGEHGDSSVPVWSGVNVAGVSLQTLNPKMGAEGDSENWKAVHKMVVDGAYEVIKLKGYTSWAIGMSVADLVESIVKNLHKVHPVSTLVKGMHGVKDEVFLSVPCVLGNSGLTDVIHMTLKADEEKQLVKSAETLWGVQKELTL.

NAD(+) is bound by residues 29–57 (GMVGMASAISILLKDLCDELALVDVMEDK) and Arg-99. Substrate is bound by residues Arg-106, Asn-138, and Arg-169. NAD(+) is bound at residue Asn-138. His-193 serves as the catalytic Proton acceptor. Thr-248 contacts substrate.

This sequence belongs to the LDH/MDH superfamily. LDH family. Homotetramer.

It is found in the cytoplasm. The enzyme catalyses (S)-lactate + NAD(+) = pyruvate + NADH + H(+). It participates in fermentation; pyruvate fermentation to lactate; (S)-lactate from pyruvate: step 1/1. In terms of biological role, interconverts simultaneously and stereospecifically pyruvate and lactate with concomitant interconversion of NADH and NAD(+). This Rhinogobiops nicholsii (Blackeye goby) protein is L-lactate dehydrogenase A chain (ldha).